Consider the following 338-residue polypeptide: MKKIITSFPNLLLSILLCFVLSSCSSTGVKMSDSSPWKTIQFQDQANALDVDFIDNNNGFLVGSNRLIMESNDGGETWEKRNLDLPSEENFRLIDIDFKGQEGWLIGQPSLVMHTLDAGKNWTRLSLGNKLPGQPYLITTVDDGVAELATTAGAIYQTSDSGESWNAKVLDASGSGGVRDLRRTDKGDYVSVSSLGNFFSTLENDSNSWIAHQRASSKRVQSIGFNPEGSLWMLSRGAEIRFNEDTNDLENWSKPIIPILNGYNYLDMGWDPNGDIWAGGGNGTLIVSKDQGKTWNKYPIAAELPTNYIKIVFLDKEALDNQKGFVLGERGYILKWNS.

The signal sequence occupies residues 1-23 (MKKIITSFPNLLLSILLCFVLSS). Cysteine 24 is lipidated: N-palmitoyl cysteine. Cysteine 24 carries the S-diacylglycerol cysteine lipid modification.

It belongs to the Ycf48 family. Part of early PSII assembly complexes which includes D1 (psbA) and PsbI; not found in mature PSII. Binds to the lumenal side of PSII complexes. Interacts with YidC.

It localises to the cellular thylakoid membrane. In terms of biological role, a factor required for optimal assembly of photosystem II (PSII), acting in the early stages of PSII assembly. Also plays a role in replacement of photodamaged D1 (psbA). Assists YidC in synthesis of chlorophyll-binding proteins. This Prochlorococcus marinus (strain MIT 9312) protein is Photosystem II assembly lipoprotein Ycf48.